The sequence spans 223 residues: UPF0641 membrane protein PJ4664.05 (223 aa).

5 helical membrane passes run 10–30 (FNSF…FNWI), 49–69 (LTVL…FSDI), 81–101 (ILLY…WSIV), 146–166 (LSIG…MLWV), and 190–210 (TIFY…LKMV).

This sequence belongs to the UPF0641 family.

The protein resides in the endoplasmic reticulum membrane. This chain is UPF0641 membrane protein PJ4664.05, found in Schizosaccharomyces pombe (strain 972 / ATCC 24843) (Fission yeast).